The primary structure comprises 282 residues: MESFKYCFDNDGKKWIIGNTLYSGNSILYKVRKNFTSSFYNYVMKIDHKSHKPLLSEIRFYISVLDPLTINNWTRERGIKYLAIPDLYGIGETDDYMFFIIKNLGRVFAPKDSESVFEACVTMINTLEFIHSQGFTHGKIEPMNILIRNKRISLIDYSRTNKLYKSGTHIDYNEDMITSGNINYMCVDNHLGATVSRRGDLEMLGYCMIEWFGGKLPWKNESSIKVIKQKKEYKQFIATFFEDCFPEGNEPLELVRYIELVYMLDYSQTPNYDRLRRLFIQD.

Residues methionine 1 and lysine 30 each contribute to the ATP site. Residues 1–282 (MESFKYCFDN…DRLRRLFIQD (282 aa)) form the Protein kinase domain.

This sequence belongs to the protein kinase superfamily. Ser/Thr protein kinase family. Poxviruses subfamily. In terms of assembly, interacts with B1/VPK1. Interacts with host VRK1. Interacts with host VRK2.

The protein resides in the host nucleus. With respect to regulation, both catalytically active kinases B1/VPK1 and host VRK2 repress B12 inhibitory activity in a B1/VPK1 deletion mutant strain. In terms of biological role, pseudokinase that plays a role in viral DNA replication repression by activating the antiviral protein BANF1 and inhibiting the activity of host VRK1, a cellular modulator of BANF1. In Cynomys gunnisoni (Gunnison's prairie dog), this protein is Pseudokinase OPG198 (OPG198).